A 119-amino-acid chain; its full sequence is Protein TusC (119 aa).

Belongs to the DsrF/TusC family. In terms of assembly, heterohexamer, formed by a dimer of trimers. The hexameric TusBCD complex contains 2 copies each of TusB, TusC and TusD. The TusBCD complex interacts with TusE.

It is found in the cytoplasm. Part of a sulfur-relay system required for 2-thiolation of 5-methylaminomethyl-2-thiouridine (mnm(5)s(2)U) at tRNA wobble positions. The chain is Protein TusC from Klebsiella pneumoniae subsp. pneumoniae (strain ATCC 700721 / MGH 78578).